The sequence spans 813 residues: ATP-dependent zinc metalloprotease FTSH 10, mitochondrial (813 aa).

A mitochondrion-targeting transit peptide spans 1–86; that stretch reads MIFSKLGSSL…FANPRLRRFF (86 aa). The tract at residues 93 to 129 is disordered; that stretch reads KKNYENYYPKDSKKAPKNEQKSESRDGSKKNENENAG. The span at 94–125 shows a compositional bias: basic and acidic residues; that stretch reads KNYENYYPKDSKKAPKNEQKSESRDGSKKNEN. A helical transmembrane segment spans residues 139–157; sequence MLIPLMAIALILSTFSLGS. ATP is bound at residue 367–374; sequence GPPGTGKT. His592 serves as a coordination point for Zn(2+). Residue Glu593 is part of the active site. 2 residues coordinate Zn(2+): His596 and Asp668. The span at 764-790 shows a compositional bias: basic and acidic residues; it reads RPFKSGETTNYDRFKSGFEESEKESQK. The segment at 764-813 is disordered; that stretch reads RPFKSGETTNYDRFKSGFEESEKESQKESVPVKPVEDDGIPPLEPQVVPT.

The protein in the N-terminal section; belongs to the AAA ATPase family. In the C-terminal section; belongs to the peptidase M41 family. It depends on Zn(2+) as a cofactor.

Its subcellular location is the mitochondrion inner membrane. In terms of biological role, probable ATP-dependent zinc metallopeptidase. Involved in the assembly and/or stability of the complexes I and V of the mitochondrial oxidative phosphorylation system. The sequence is that of ATP-dependent zinc metalloprotease FTSH 10, mitochondrial (FTSH10) from Arabidopsis thaliana (Mouse-ear cress).